The chain runs to 234 residues: Carboxy-S-adenosyl-L-methionine synthase (234 aa).

Residues Tyr-35, 60–62 (GCS), 83–84 (DN), 109–110 (DI), Asn-124, and Arg-191 each bind S-adenosyl-L-methionine.

This sequence belongs to the class I-like SAM-binding methyltransferase superfamily. Cx-SAM synthase family. As to quaternary structure, homodimer.

The enzyme catalyses prephenate + S-adenosyl-L-methionine = carboxy-S-adenosyl-L-methionine + 3-phenylpyruvate + H2O. Catalyzes the conversion of S-adenosyl-L-methionine (SAM) to carboxy-S-adenosyl-L-methionine (Cx-SAM). The protein is Carboxy-S-adenosyl-L-methionine synthase of Campylobacter hominis (strain ATCC BAA-381 / DSM 21671 / CCUG 45161 / LMG 19568 / NCTC 13146 / CH001A).